We begin with the raw amino-acid sequence, 299 residues long: UPF0276 protein ABO_1518 (299 aa).

The protein belongs to the UPF0276 family.

The chain is UPF0276 protein ABO_1518 from Alcanivorax borkumensis (strain ATCC 700651 / DSM 11573 / NCIMB 13689 / SK2).